Reading from the N-terminus, the 337-residue chain is Anthranilate phosphoribosyltransferase (337 aa).

5-phospho-alpha-D-ribose 1-diphosphate contacts are provided by residues Gly-81, 84–85 (GD), Thr-89, 91–94 (NIST), 109–117 (KHGNRALSS), and Thr-121. Gly-81 contributes to the anthranilate binding site. Position 93 (Ser-93) interacts with Mg(2+). Asn-112 contributes to the anthranilate binding site. An anthranilate-binding site is contributed by Arg-167. Mg(2+)-binding residues include Asp-225 and Glu-226.

It belongs to the anthranilate phosphoribosyltransferase family. In terms of assembly, homodimer. Requires Mg(2+) as cofactor.

It catalyses the reaction N-(5-phospho-beta-D-ribosyl)anthranilate + diphosphate = 5-phospho-alpha-D-ribose 1-diphosphate + anthranilate. It functions in the pathway amino-acid biosynthesis; L-tryptophan biosynthesis; L-tryptophan from chorismate: step 2/5. In terms of biological role, catalyzes the transfer of the phosphoribosyl group of 5-phosphorylribose-1-pyrophosphate (PRPP) to anthranilate to yield N-(5'-phosphoribosyl)-anthranilate (PRA). This Sinorhizobium medicae (strain WSM419) (Ensifer medicae) protein is Anthranilate phosphoribosyltransferase.